Consider the following 638-residue polypeptide: Cytoplasmic dynein 1 intermediate chain 2 (638 aa).

2 stretches are compositionally biased toward basic and acidic residues: residues 1–13 and 20–43; these read MSDK…ELER and QIRE…KKEA. 2 disordered regions span residues 1–135 and 155–214; these read MSDK…GRGP and TYTK…EEKQ. The residue at position 2 (S2) is an N-acetylserine. A Diphosphoserine modification is found at S51. Residues S51, S73, W81, P84, and S90 each carry the phosphoserine modification. Residues 88–97 are compositionally biased toward low complexity; sequence PSSKSVSTPS. T95 carries the phosphothreonine modification. 3 positions are modified to phosphoserine: S97, S101, and S104. A compositionally biased stretch (basic and acidic residues) spans 190 to 214; it reads EKTLKKDEENDSKAPPHELTEEEKQ. WD repeat units lie at residues 277–326, 330–370, 379–420, 429–469, 474–519, 522–562, and 568–607; these read SKHR…TTPE, HCQS…RTPV, AHTH…HPQD, SKAV…AGIS, GHQG…PLYS, DNAD…EVPT, and EGNP…AVPR.

Belongs to the dynein intermediate chain family. In terms of assembly, homodimer. The cytoplasmic dynein 1 complex consists of two catalytic heavy chains (HCs) and a number of non-catalytic subunits presented by intermediate chains (ICs), light intermediate chains (LICs) and light chains (LCs); the composition seems to vary in respect to the IC, LIC and LC composition. The heavy chain homodimer serves as a scaffold for the probable homodimeric assembly of the respective non-catalytic subunits. The ICs and LICs bind directly to the HC dimer and the LCs assemble on the IC dimer. Interacts with DYNLT3. Interacts with DYNLT1. Interacts (dephosphorylated at Ser-90) with DCTN1. Interacts with BICD2. Interacts with SPEF2. Interacts with CFAP61. As to quaternary structure, (Microbial infection) Interacts with human adenovirus 5 hexon protein; this interaction probably allows virus intracellular transport. The phosphorylation status of Ser-90 appears to be involved in dynactin-dependent target binding. In terms of processing, pyrophosphorylation by 5-diphosphoinositol pentakisphosphate (5-IP7) promotes interaction with DCTN1. Serine pyrophosphorylation is achieved by Mg(2+)-dependent, but enzyme independent transfer of a beta-phosphate from a inositol pyrophosphate to a pre-phosphorylated serine residue.

Its subcellular location is the cytoplasm. It is found in the cytoskeleton. In terms of biological role, acts as one of several non-catalytic accessory components of the cytoplasmic dynein 1 complex that are thought to be involved in linking dynein to cargos and to adapter proteins that regulate dynein function. Cytoplasmic dynein 1 acts as a motor for the intracellular retrograde motility of vesicles and organelles along microtubules. The intermediate chains mediate the binding of dynein to dynactin via its 150 kDa component (p150-glued) DCTN1. Involved in membrane-transport, such as Golgi apparatus, late endosomes and lysosomes. This Homo sapiens (Human) protein is Cytoplasmic dynein 1 intermediate chain 2.